A 282-amino-acid polypeptide reads, in one-letter code: Acetyl-coenzyme A carboxylase carboxyl transferase subunit beta (282 aa).

One can recognise a CoA carboxyltransferase N-terminal domain in the interval 29 to 282 (LMKRCPNCGL…LLKYGGMQDD (254 aa)). Zn(2+) is bound by residues cysteine 33, cysteine 36, cysteine 51, and cysteine 54. The segment at 33–54 (CPNCGLEFFARRLDKYKTCPDC) adopts a C4-type zinc-finger fold.

This sequence belongs to the AccD/PCCB family. As to quaternary structure, acetyl-CoA carboxylase is a heterohexamer composed of biotin carboxyl carrier protein (AccB), biotin carboxylase (AccC) and two subunits each of ACCase subunit alpha (AccA) and ACCase subunit beta (AccD). The cofactor is Zn(2+).

It is found in the cytoplasm. It catalyses the reaction N(6)-carboxybiotinyl-L-lysyl-[protein] + acetyl-CoA = N(6)-biotinyl-L-lysyl-[protein] + malonyl-CoA. The protein operates within lipid metabolism; malonyl-CoA biosynthesis; malonyl-CoA from acetyl-CoA: step 1/1. In terms of biological role, component of the acetyl coenzyme A carboxylase (ACC) complex. Biotin carboxylase (BC) catalyzes the carboxylation of biotin on its carrier protein (BCCP) and then the CO(2) group is transferred by the transcarboxylase to acetyl-CoA to form malonyl-CoA. This Lactobacillus delbrueckii subsp. bulgaricus (strain ATCC 11842 / DSM 20081 / BCRC 10696 / JCM 1002 / NBRC 13953 / NCIMB 11778 / NCTC 12712 / WDCM 00102 / Lb 14) protein is Acetyl-coenzyme A carboxylase carboxyl transferase subunit beta.